The sequence spans 314 residues: Cathepsin L 1 (314 aa).

A signal peptide spans 1–24 (MMLLGASLYLNNTQEVSDEIDTAN). Positions 25-109 (LYANWKMKYN…NAANSNFQYK (85 aa)) are cleaved as a propeptide — activation peptide. Intrachain disulfides connect C132-C175, C166-C207, and C259-C302. C135 is a catalytic residue. Active-site residues include H265 and N282.

The protein belongs to the peptidase C1 family.

It localises to the secreted. It catalyses the reaction Specificity close to that of papain. As compared to cathepsin B, cathepsin L exhibits higher activity toward protein substrates, but has little activity on Z-Arg-Arg-NHMec, and no peptidyl-dipeptidase activity.. Functionally, may be involved in extracellular digestion. In Paramecium tetraurelia, this protein is Cathepsin L 1.